We begin with the raw amino-acid sequence, 107 residues long: Large ribosomal subunit protein uL24 (107 aa).

It belongs to the universal ribosomal protein uL24 family. In terms of assembly, part of the 50S ribosomal subunit.

In terms of biological role, one of two assembly initiator proteins, it binds directly to the 5'-end of the 23S rRNA, where it nucleates assembly of the 50S subunit. Functionally, one of the proteins that surrounds the polypeptide exit tunnel on the outside of the subunit. In Kosmotoga olearia (strain ATCC BAA-1733 / DSM 21960 / TBF 19.5.1), this protein is Large ribosomal subunit protein uL24.